We begin with the raw amino-acid sequence, 301 residues long: MTSQDSVDWQDVLPVDERQRIRDLISDATSADGVAPVGDQVLRELGQQRTRHLVALQDGALRGYLNLAPAGDGAPPMAELVVHPDARRRGIGSAMIRTALSVGGPDTRIWAHGDLEPARATAAALGLSAVRELLQMRRSLADLPTAPPVDGVRFATYAGPQDDAEVLRVNNAAFSWHPEQGGWTEADIAERRDEQWFDPDGFFLAFDEDSGRLLGFHWTKVHSATLGEVYVVGVDTAAQGRGLGGALTLIGLHHLADRLLSSGHDADVMLYVEADNTAAVKTYRRLGFEVVNTDVAYAVEG.

N-acetyltransferase domains follow at residues 7 to 150 (VDWQ…PPVD) and 152 to 301 (VRFA…AVEG). Asp-39 contacts 1D-myo-inositol 2-(L-cysteinylamino)-2-deoxy-alpha-D-glucopyranoside. Acetyl-CoA is bound by residues 80–82 (LVV) and 88–93 (RRGIGS). 3 residues coordinate 1D-myo-inositol 2-(L-cysteinylamino)-2-deoxy-alpha-D-glucopyranoside: Glu-179, Lys-220, and Glu-228. 232–234 (VGV) serves as a coordination point for acetyl-CoA. Tyr-271 contributes to the 1D-myo-inositol 2-(L-cysteinylamino)-2-deoxy-alpha-D-glucopyranoside binding site. Position 276-281 (276-281 (NTAAVK)) interacts with acetyl-CoA.

The protein belongs to the acetyltransferase family. MshD subfamily. Monomer.

It carries out the reaction 1D-myo-inositol 2-(L-cysteinylamino)-2-deoxy-alpha-D-glucopyranoside + acetyl-CoA = mycothiol + CoA + H(+). In terms of biological role, catalyzes the transfer of acetyl from acetyl-CoA to desacetylmycothiol (Cys-GlcN-Ins) to form mycothiol. The polypeptide is Mycothiol acetyltransferase (Mycolicibacterium vanbaalenii (strain DSM 7251 / JCM 13017 / BCRC 16820 / KCTC 9966 / NRRL B-24157 / PYR-1) (Mycobacterium vanbaalenii)).